Here is a 264-residue protein sequence, read N- to C-terminus: 3-methyl-2-oxobutanoate hydroxymethyltransferase (264 aa).

The Mg(2+) site is built by Asp45 and Asp84. 3-methyl-2-oxobutanoate contacts are provided by residues 45–46 (DS), Asp84, and Lys112. A Mg(2+)-binding site is contributed by Glu114. The active-site Proton acceptor is the Glu181.

It belongs to the PanB family. Homodecamer; pentamer of dimers. Mg(2+) is required as a cofactor.

The protein resides in the cytoplasm. The catalysed reaction is 3-methyl-2-oxobutanoate + (6R)-5,10-methylene-5,6,7,8-tetrahydrofolate + H2O = 2-dehydropantoate + (6S)-5,6,7,8-tetrahydrofolate. Its pathway is cofactor biosynthesis; (R)-pantothenate biosynthesis; (R)-pantoate from 3-methyl-2-oxobutanoate: step 1/2. In terms of biological role, catalyzes the reversible reaction in which hydroxymethyl group from 5,10-methylenetetrahydrofolate is transferred onto alpha-ketoisovalerate to form ketopantoate. The chain is 3-methyl-2-oxobutanoate hydroxymethyltransferase from Escherichia coli O81 (strain ED1a).